The sequence spans 121 residues: Small ribosomal subunit protein uS13 (121 aa).

Residues 93–121 (RGLPVRGQNSKNNARTRKGPRRTVANKKK) form a disordered region. The span at 106–121 (ARTRKGPRRTVANKKK) shows a compositional bias: basic residues.

The protein belongs to the universal ribosomal protein uS13 family. Part of the 30S ribosomal subunit. Forms a loose heterodimer with protein S19. Forms two bridges to the 50S subunit in the 70S ribosome.

Functionally, located at the top of the head of the 30S subunit, it contacts several helices of the 16S rRNA. In the 70S ribosome it contacts the 23S rRNA (bridge B1a) and protein L5 of the 50S subunit (bridge B1b), connecting the 2 subunits; these bridges are implicated in subunit movement. Contacts the tRNAs in the A and P-sites. The protein is Small ribosomal subunit protein uS13 of Bacillus subtilis (strain 168).